The primary structure comprises 81 residues: MTFPRALTVIDDNGLVISIIFWFLLIIILILFSIALLNIIKLCMVCCNLGRTVIVPVQHAYDAYKNFMRIKAYNHDGALLV.

Residues 1–19 (MTFPRALTVIDDNGLVISI) are Virion surface-facing. Residues 20–40 (IFWFLLIIILILFSIALLNII) traverse the membrane as a helical segment. The Intravirion segment spans residues 41–81 (KLCMVCCNLGRTVIVPVQHAYDAYKNFMRIKAYNHDGALLV).

This sequence belongs to the alphacoronaviruses E protein family. As to quaternary structure, homopentamer. Interacts with membrane protein M in the budding compartment of the host cell, which is located between endoplasmic reticulum and the Golgi complex. Interacts with Nucleoprotein.

It is found in the host Golgi apparatus membrane. Plays a central role in virus morphogenesis and assembly. Acts as a viroporin and self-assembles in host membranes forming pentameric protein-lipid pores that allow ion transport. Also plays a role in the induction of apoptosis. The sequence is that of Envelope small membrane protein from Porcine transmissible gastroenteritis coronavirus (strain FS772/70) (TGEV).